Reading from the N-terminus, the 813-residue chain is LPS-assembly protein LptD (813 aa).

The first 22 residues, 1–22 (MRRALRLLPLPLSIAICLPAMA), serve as a signal peptide directing secretion.

It belongs to the LptD family. In terms of assembly, component of the lipopolysaccharide transport and assembly complex. Interacts with LptE and LptA.

The protein localises to the cell outer membrane. In terms of biological role, together with LptE, is involved in the assembly of lipopolysaccharide (LPS) at the surface of the outer membrane. This chain is LPS-assembly protein LptD, found in Xanthomonas axonopodis pv. citri (strain 306).